The sequence spans 177 residues: Putative peroxiredoxin (177 aa).

The region spanning 8-177 (TAKGNEIPDT…ASIDTILTKV (170 aa)) is the Thioredoxin domain. C64 acts as the Cysteine sulfenic acid (-SOH) intermediate in catalysis. A Microbody targeting signal motif is present at residues 175 to 177 (TKV).

It belongs to the peroxiredoxin family. Prx5 subfamily. As to quaternary structure, homodimer; disulfide-linked, upon oxidation.

The enzyme catalyses a hydroperoxide + [thioredoxin]-dithiol = an alcohol + [thioredoxin]-disulfide + H2O. Thiol-specific peroxidase that catalyzes the reduction of hydrogen peroxide and organic hydroperoxides to water and alcohols, respectively. Plays a role in cell protection against oxidative stress by detoxifying peroxides and as sensor of hydrogen peroxide-mediated signaling events. The protein is Putative peroxiredoxin of Malassezia furfur (Pityriasis versicolor infection agent).